Reading from the N-terminus, the 204-residue chain is Thiamine-phosphate synthase (204 aa).

4-amino-2-methyl-5-(diphosphooxymethyl)pyrimidine-binding positions include 28-32 (QLRIK) and Asn-60. Mg(2+)-binding residues include Asp-61 and Asp-80. Residues Ser-99 and Lys-128 each coordinate 4-amino-2-methyl-5-(diphosphooxymethyl)pyrimidine. Residues Gly-157 and 177 to 178 (VT) each bind 2-[(2R,5Z)-2-carboxy-4-methylthiazol-5(2H)-ylidene]ethyl phosphate.

It belongs to the thiamine-phosphate synthase family. The cofactor is Mg(2+).

It catalyses the reaction 2-[(2R,5Z)-2-carboxy-4-methylthiazol-5(2H)-ylidene]ethyl phosphate + 4-amino-2-methyl-5-(diphosphooxymethyl)pyrimidine + 2 H(+) = thiamine phosphate + CO2 + diphosphate. It carries out the reaction 2-(2-carboxy-4-methylthiazol-5-yl)ethyl phosphate + 4-amino-2-methyl-5-(diphosphooxymethyl)pyrimidine + 2 H(+) = thiamine phosphate + CO2 + diphosphate. The catalysed reaction is 4-methyl-5-(2-phosphooxyethyl)-thiazole + 4-amino-2-methyl-5-(diphosphooxymethyl)pyrimidine + H(+) = thiamine phosphate + diphosphate. The protein operates within cofactor biosynthesis; thiamine diphosphate biosynthesis; thiamine phosphate from 4-amino-2-methyl-5-diphosphomethylpyrimidine and 4-methyl-5-(2-phosphoethyl)-thiazole: step 1/1. In terms of biological role, condenses 4-methyl-5-(beta-hydroxyethyl)thiazole monophosphate (THZ-P) and 2-methyl-4-amino-5-hydroxymethyl pyrimidine pyrophosphate (HMP-PP) to form thiamine monophosphate (TMP). This Rhizobium etli (strain ATCC 51251 / DSM 11541 / JCM 21823 / NBRC 15573 / CFN 42) protein is Thiamine-phosphate synthase.